A 187-amino-acid chain; its full sequence is Mast cell-expressed membrane protein 1 (187 aa).

Residues 1–85 are Cytoplasmic-facing; the sequence is MEVEEIYKHQ…PCWLYRAILS (85 aa). A disordered region spans residues 49 to 71; that stretch reads DHAKGGHSRPTSQVPAQCRPPSD. The helical; Signal-anchor for type II membrane protein transmembrane segment at 86–106 threads the bilayer; it reads LYILLALAFVLCIILSAFIMV. The Extracellular portion of the chain corresponds to 107–187; the sequence is KNAEMSKELL…LQKMPQSSPQ (81 aa). Residue N124 is glycosylated (N-linked (GlcNAc...) asparagine).

As to expression, expressed specifically in mast cells. Found primarily in lung.

The protein localises to the membrane. This Homo sapiens (Human) protein is Mast cell-expressed membrane protein 1.